The sequence spans 213 residues: Kynurenine formamidase (213 aa).

Trp-18 contributes to the substrate binding site. Residues His-48, His-52, and Asp-54 each coordinate Zn(2+). His-58 (proton donor/acceptor) is an active-site residue. Residues His-160 and Glu-172 each coordinate Zn(2+).

It belongs to the Cyclase 1 superfamily. KynB family. Homodimer. The cofactor is Zn(2+).

The catalysed reaction is N-formyl-L-kynurenine + H2O = L-kynurenine + formate + H(+). The protein operates within amino-acid degradation; L-tryptophan degradation via kynurenine pathway; L-kynurenine from L-tryptophan: step 2/2. Catalyzes the hydrolysis of N-formyl-L-kynurenine to L-kynurenine, the second step in the kynurenine pathway of tryptophan degradation. This chain is Kynurenine formamidase, found in Burkholderia vietnamiensis (strain G4 / LMG 22486) (Burkholderia cepacia (strain R1808)).